The chain runs to 231 residues: Potassium/proton antiporter CemA (231 aa).

A run of 4 helical transmembrane segments spans residues 7–27 (FIPL…SFTF), 104–124 (IHTI…SVYS), 154–174 (ILFL…ELMI), and 189–209 (IISF…KYWI).

Belongs to the CemA family.

It is found in the plastid. It localises to the chloroplast inner membrane. It catalyses the reaction K(+)(in) + H(+)(out) = K(+)(out) + H(+)(in). Functionally, contributes to K(+)/H(+) antiport activity by supporting proton efflux to control proton extrusion and homeostasis in chloroplasts in a light-dependent manner to modulate photosynthesis. Prevents excessive induction of non-photochemical quenching (NPQ) under continuous-light conditions. Indirectly promotes efficient inorganic carbon uptake into chloroplasts. The sequence is that of Potassium/proton antiporter CemA from Pisum sativum (Garden pea).